The sequence spans 155 residues: Ribosome maturation factor RimP (155 aa).

It belongs to the RimP family.

The protein resides in the cytoplasm. Functionally, required for maturation of 30S ribosomal subunits. The protein is Ribosome maturation factor RimP of Prochlorococcus marinus (strain MIT 9312).